Consider the following 152-residue polypeptide: Ribosome maturation factor RimP (152 aa).

Belongs to the RimP family.

It localises to the cytoplasm. Its function is as follows. Required for maturation of 30S ribosomal subunits. The chain is Ribosome maturation factor RimP from Ectopseudomonas mendocina (strain ymp) (Pseudomonas mendocina).